A 354-amino-acid polypeptide reads, in one-letter code: Uroporphyrinogen decarboxylase (354 aa).

Substrate contacts are provided by residues 27-31, Asp77, Tyr154, Thr209, and His327; that span reads RQAGR.

This sequence belongs to the uroporphyrinogen decarboxylase family. Homodimer.

It localises to the cytoplasm. It carries out the reaction uroporphyrinogen III + 4 H(+) = coproporphyrinogen III + 4 CO2. It functions in the pathway porphyrin-containing compound metabolism; protoporphyrin-IX biosynthesis; coproporphyrinogen-III from 5-aminolevulinate: step 4/4. In terms of biological role, catalyzes the decarboxylation of four acetate groups of uroporphyrinogen-III to yield coproporphyrinogen-III. The protein is Uroporphyrinogen decarboxylase of Escherichia coli O81 (strain ED1a).